The following is an 829-amino-acid chain: Leucine--tRNA ligase (829 aa).

The 'HIGH' region signature appears at 34 to 44 (PYPSGNIHMGH). The 'KMSKS' region motif lies at 591–595 (KMSKS). Lys594 contacts ATP.

This sequence belongs to the class-I aminoacyl-tRNA synthetase family.

The protein localises to the cytoplasm. The enzyme catalyses tRNA(Leu) + L-leucine + ATP = L-leucyl-tRNA(Leu) + AMP + diphosphate. This Ehrlichia chaffeensis (strain ATCC CRL-10679 / Arkansas) protein is Leucine--tRNA ligase.